A 656-amino-acid polypeptide reads, in one-letter code: Nexilin (656 aa).

3 disordered regions span residues 1–131, 165–198, and 215–284; these read MNDV…IEQD, RAAA…EEEC, and TEAK…VFKE. The span at 11–26 shows a compositional bias: low complexity; sequence LLSSSKPVPKSYVPKL. Basic and acidic residues predominate over residues 27–78; that stretch reads GKGDVKDKFEAMQRAREERNQRRSRDEKQRRKEQYIREREWNRRKQEIKDML. Ser-80 bears the Phosphoserine mark. Composition is skewed to basic and acidic residues over residues 103–131, 169–198, and 216–269; these read GKFD…IEQD, NRKD…EEEC, and EAKK…RNMV. Phosphoserine occurs at positions 221, 330, 337, and 345. Position 350 is a phosphothreonine (Thr-350). 2 disordered regions span residues 468 to 492 and 529 to 564; these read NFHE…HKVN and AALQ…APWF. Residues Ser-544 and Ser-549 each carry the phosphoserine modification. A Phosphothreonine modification is found at Thr-551. Residues 562–650 enclose the Ig-like domain; the sequence is PWFKKPLRNT…GSAASTCILT (89 aa).

Interacts with F-actin. As to expression, expressed in brain, testis, spleen and fibroblasts (at protein level). Not detected in liver, kidney or epithelial cells (at protein level).

Its subcellular location is the cytoplasm. The protein resides in the cytoskeleton. It is found in the cell junction. The protein localises to the adherens junction. It localises to the myofibril. Its subcellular location is the sarcomere. The protein resides in the z line. In terms of biological role, involved in regulating cell migration through association with the actin cytoskeleton. Has an essential role in the maintenance of Z line and sarcomere integrity. The sequence is that of Nexilin from Rattus norvegicus (Rat).